Reading from the N-terminus, the 389-residue chain is 2-aminoethylphosphonate--pyruvate transaminase 1 (389 aa).

Lysine 196 is subject to N6-(pyridoxal phosphate)lysine.

It belongs to the class-V pyridoxal-phosphate-dependent aminotransferase family. PhnW subfamily. Homodimer. It depends on pyridoxal 5'-phosphate as a cofactor.

It carries out the reaction (2-aminoethyl)phosphonate + pyruvate = phosphonoacetaldehyde + L-alanine. In terms of biological role, involved in phosphonate degradation. This is 2-aminoethylphosphonate--pyruvate transaminase 1 from Paraburkholderia xenovorans (strain LB400).